The chain runs to 281 residues: MAFHMATRYAHSPEDIKHFDTTKLRQEFLMEKIFNAGDILLTYTYNDRMIFGGVVPTESSLEIKLSKELGVDFFLQRRELGVINIGGPGSIIVDGDKAAMVKQDGYYIGMGTKQVVFASDNPANPAKFYVVSTPAHKTYPNKKLPFANALAKPMGDQQHLNKRTIYKYIDASQMATCQLQMGYTVLEPGSSWNTMPAHTHARRMETYMYFDFAEPDTRVLHLLGEPTETRHIALFNEQAVVNPSWSIHCGVGTTNYAFIWAMCGENQTYDDMDQVPMNELR.

Zn(2+)-binding residues include histidine 198, histidine 200, glutamate 205, and histidine 248.

The protein belongs to the KduI family. Zn(2+) is required as a cofactor.

The enzyme catalyses 5-dehydro-4-deoxy-D-glucuronate = 3-deoxy-D-glycero-2,5-hexodiulosonate. It functions in the pathway glycan metabolism; pectin degradation; 2-dehydro-3-deoxy-D-gluconate from pectin: step 4/5. Functionally, catalyzes the isomerization of 5-dehydro-4-deoxy-D-glucuronate to 3-deoxy-D-glycero-2,5-hexodiulosonate. In Lacticaseibacillus paracasei (strain ATCC 334 / BCRC 17002 / CCUG 31169 / CIP 107868 / KCTC 3260 / NRRL B-441) (Lactobacillus paracasei), this protein is 4-deoxy-L-threo-5-hexosulose-uronate ketol-isomerase.